We begin with the raw amino-acid sequence, 119 residues long: Acidic phospholipase A2 DE-II (119 aa).

Cystine bridges form between cysteine 11-cysteine 72, cysteine 26-cysteine 118, cysteine 28-cysteine 44, cysteine 43-cysteine 99, cysteine 50-cysteine 92, cysteine 60-cysteine 85, and cysteine 79-cysteine 90. Residues tyrosine 27, glycine 29, and glycine 31 each contribute to the Ca(2+) site. Histidine 47 is a catalytic residue. Position 48 (aspartate 48) interacts with Ca(2+). Aspartate 93 is a catalytic residue.

Belongs to the phospholipase A2 family. Group I subfamily. D49 sub-subfamily. Ca(2+) serves as cofactor. In terms of tissue distribution, expressed by the venom gland.

Its subcellular location is the secreted. It catalyses the reaction a 1,2-diacyl-sn-glycero-3-phosphocholine + H2O = a 1-acyl-sn-glycero-3-phosphocholine + a fatty acid + H(+). Functionally, PLA2 catalyzes the calcium-dependent hydrolysis of the 2-acyl groups in 3-sn-phosphoglycerides. The protein is Acidic phospholipase A2 DE-II of Naja melanoleuca (Forest cobra).